The primary structure comprises 702 residues: MSRTTPICQYRNIGISAHIDAGKTTTTERILFYTGINHKIGEVHDGAATMDWMEQEQERGITITSAATTAFWSGMAKQFKPHRINIIDTPGHVDFTIEVERSMRVLDGAVMVYCAVGGVQPQSETVWRQANKYNVPRIAFINKMDRMGANFLRSVKQIKTRLGGNPVPLQLPIGSEENFKGVIDLIKMKAIKWKDIDQGITFTYDEIPSDMIELSEKWHQNLIESAVESNEELMEKYLSGFVLSEKEIKSELRKRSLNNEITLITCGSAFKNKGVQALLDAIIEYLPAPNDIQDIKGITNDKASTVAFRSSNDKAPFSALAFKIASDPFVGNLTFFRVYSGIVKSGDSVLNSVKSQRERFGRIVQMHANKREEIKEVYAGDIAAAIGLKDVTTGDTLCDLNQPIILERMEFPEPVISISVEPKTKADQEKMGLALARLAKEDPSFRVRTDQESNQTIISGMGELHLEIIVDRMKREFSVDANVGKPQVAYRETILNKVTDIEGKHIKQSGGRGQYGHVVIELFPLESGGKGYLFVNDIKGGVIPNEYISAIDKGIQEQLKYGPLAGYPVVDIGVRLYFGSYHDVDSSELAFKLAASLAFKNGFKKAKPILLEPIMKVEVETPDDYMGDVIGDLNRRRGIIEGMKDLEIGKIINACVPLSEMFGYATDLRSQTQGRASYSMEFLKYVEAPSVISDLIIQKRER.

In terms of domain architecture, tr-type G spans 8–290 (CQYRNIGISA…AIIEYLPAPN (283 aa)). Residues 17 to 24 (AHIDAGKT), 88 to 92 (DTPGH), and 142 to 145 (NKMD) each bind GTP.

This sequence belongs to the TRAFAC class translation factor GTPase superfamily. Classic translation factor GTPase family. EF-G/EF-2 subfamily.

The protein localises to the cytoplasm. Functionally, catalyzes the GTP-dependent ribosomal translocation step during translation elongation. During this step, the ribosome changes from the pre-translocational (PRE) to the post-translocational (POST) state as the newly formed A-site-bound peptidyl-tRNA and P-site-bound deacylated tRNA move to the P and E sites, respectively. Catalyzes the coordinated movement of the two tRNA molecules, the mRNA and conformational changes in the ribosome. This Buchnera aphidicola subsp. Schizaphis graminum (strain Sg) protein is Elongation factor G.